The following is a 141-amino-acid chain: Large ribosomal subunit protein uL11 (141 aa).

It belongs to the universal ribosomal protein uL11 family. As to quaternary structure, part of the ribosomal stalk of the 50S ribosomal subunit. Interacts with L10 and the large rRNA to form the base of the stalk. L10 forms an elongated spine to which L12 dimers bind in a sequential fashion forming a multimeric L10(L12)X complex. Post-translationally, one or more lysine residues are methylated.

Functionally, forms part of the ribosomal stalk which helps the ribosome interact with GTP-bound translation factors. The sequence is that of Large ribosomal subunit protein uL11 from Streptococcus suis (strain 05ZYH33).